We begin with the raw amino-acid sequence, 557 residues long: Phosphomethylpyrimidine synthase (557 aa).

Substrate contacts are provided by residues N197, M226, Y255, H291, 311–313 (SRG), 352–355 (DGLR), and E391. Residue H395 coordinates Zn(2+). Y418 contacts substrate. H459 is a binding site for Zn(2+). [4Fe-4S] cluster-binding residues include C539, C542, and C547.

It belongs to the ThiC family. In terms of assembly, homodimer. [4Fe-4S] cluster is required as a cofactor.

It catalyses the reaction 5-amino-1-(5-phospho-beta-D-ribosyl)imidazole + S-adenosyl-L-methionine = 4-amino-2-methyl-5-(phosphooxymethyl)pyrimidine + CO + 5'-deoxyadenosine + formate + L-methionine + 3 H(+). It participates in cofactor biosynthesis; thiamine diphosphate biosynthesis. Its function is as follows. Catalyzes the synthesis of the hydroxymethylpyrimidine phosphate (HMP-P) moiety of thiamine from aminoimidazole ribotide (AIR) in a radical S-adenosyl-L-methionine (SAM)-dependent reaction. This is Phosphomethylpyrimidine synthase from Anaplasma phagocytophilum (strain HZ).